A 71-amino-acid chain; its full sequence is Large ribosomal subunit protein bL31 (71 aa).

Cys-16, Cys-18, Cys-37, and Cys-40 together coordinate Zn(2+).

Belongs to the bacterial ribosomal protein bL31 family. Type A subfamily. In terms of assembly, part of the 50S ribosomal subunit. Requires Zn(2+) as cofactor.

In terms of biological role, binds the 23S rRNA. This is Large ribosomal subunit protein bL31 from Nitratidesulfovibrio vulgaris (strain ATCC 29579 / DSM 644 / CCUG 34227 / NCIMB 8303 / VKM B-1760 / Hildenborough) (Desulfovibrio vulgaris).